The following is a 214-amino-acid chain: Adenylate kinase (214 aa).

An ATP-binding site is contributed by 10–15 (GAGKGT). Positions 30 to 59 (STGDMLRAAIKAGTELGLKAKAVMDAGQLV) are NMP. Residues Thr-31, Arg-36, 57–59 (QLV), 85–88 (GFPR), and Gln-92 contribute to the AMP site. The tract at residues 122–159 (GRRVHSGSGRTYHVVFNPPKVEGKDDVTGEDLVIRADD) is LID. ATP contacts are provided by residues Arg-123 and 132-133 (TY). The AMP site is built by Arg-156 and Arg-167. Position 200 (Gln-200) interacts with ATP.

It belongs to the adenylate kinase family. Monomer.

It is found in the cytoplasm. It catalyses the reaction AMP + ATP = 2 ADP. It participates in purine metabolism; AMP biosynthesis via salvage pathway; AMP from ADP: step 1/1. Functionally, catalyzes the reversible transfer of the terminal phosphate group between ATP and AMP. Plays an important role in cellular energy homeostasis and in adenine nucleotide metabolism. The protein is Adenylate kinase of Aeromonas hydrophila subsp. hydrophila (strain ATCC 7966 / DSM 30187 / BCRC 13018 / CCUG 14551 / JCM 1027 / KCTC 2358 / NCIMB 9240 / NCTC 8049).